A 266-amino-acid chain; its full sequence is Phosphate import ATP-binding protein PstB 1 (266 aa).

Positions 18 to 261 (AQTSNLSFYY…PTNQLTEQYV (244 aa)) constitute an ABC transporter domain. Position 50–57 (50–57 (GPSGCGKT)) interacts with ATP.

It belongs to the ABC transporter superfamily. Phosphate importer (TC 3.A.1.7) family. The complex is composed of two ATP-binding proteins (PstB), two transmembrane proteins (PstC and PstA) and a solute-binding protein (PstS).

The protein localises to the cell inner membrane. It catalyses the reaction phosphate(out) + ATP + H2O = ADP + 2 phosphate(in) + H(+). Its function is as follows. Part of the ABC transporter complex PstSACB involved in phosphate import. Responsible for energy coupling to the transport system. The sequence is that of Phosphate import ATP-binding protein PstB 1 from Gloeobacter violaceus (strain ATCC 29082 / PCC 7421).